We begin with the raw amino-acid sequence, 228 residues long: Ribulose-phosphate 3-epimerase, cytoplasmic isoform (228 aa).

Ser-12 is a substrate binding site. A divalent metal cation-binding residues include His-37, Asp-39, and His-70. The active-site Proton acceptor is Asp-39. Substrate contacts are provided by residues His-70, 150 to 153 (GFGG), 179 to 181 (DGG), and 201 to 202 (GS). Asp-179 contacts a divalent metal cation. The active-site Proton donor is the Asp-179.

This sequence belongs to the ribulose-phosphate 3-epimerase family. As to quaternary structure, homodimer. Co(2+) is required as a cofactor. Requires Fe(2+) as cofactor. It depends on Mn(2+) as a cofactor. Zn(2+) serves as cofactor. In terms of tissue distribution, predominantly accumulates in roots and seedlings.

The protein localises to the cytoplasm. The enzyme catalyses D-ribulose 5-phosphate = D-xylulose 5-phosphate. Its pathway is carbohydrate degradation; pentose phosphate pathway; D-xylulose 5-phosphate from D-ribulose 5-phosphate (non-oxidative stage): step 1/1. Functionally, catalyzes the reversible epimerization of D-ribulose 5-phosphate to D-xylulose 5-phosphate. The polypeptide is Ribulose-phosphate 3-epimerase, cytoplasmic isoform (Oryza sativa subsp. japonica (Rice)).